The following is a 102-amino-acid chain: Small ribosomal subunit protein uS10 (102 aa).

Belongs to the universal ribosomal protein uS10 family. In terms of assembly, part of the 30S ribosomal subunit.

Its function is as follows. Involved in the binding of tRNA to the ribosomes. The polypeptide is Small ribosomal subunit protein uS10 (Coprothermobacter proteolyticus (strain ATCC 35245 / DSM 5265 / OCM 4 / BT)).